A 1857-amino-acid polypeptide reads, in one-letter code: Peripheral-type benzodiazepine receptor-associated protein 1 (1857 aa).

3 disordered regions span residues 1 to 103, 284 to 321, and 565 to 629; these read MEQL…RPED, QRET…QEDA, and PKDL…DTAS. Over residues 55–67 the composition is skewed to basic and acidic residues; the sequence is LRSEESSKPKGDG. Over residues 87 to 96 the composition is skewed to polar residues; it reads LGQQASSSGP. Pro residues predominate over residues 289-298; the sequence is PLPPSWPPGP. 2 stretches are compositionally biased toward low complexity: residues 299 to 316 and 603 to 616; these read ALQA…GEAT and SLSN…IHNS. The SH3 1 domain maps to 653–720; it reads ARIQVFLARY…PSNFVERVSD (68 aa). Residues 729–789 form a disordered region; that stretch reads PELADLSHSS…PSPEGLGEPP (61 aa). Residues 755–764 are compositionally biased toward low complexity; the sequence is GGQSSVGRSQ. 3 consecutive Fibronectin type-III domains span residues 791-882, 884-976, and 981-1081; these read VPYP…ARAG, VPSQ…TLPA, and APLD…LAPA. Disordered stretches follow at residues 1083–1311, 1330–1479, and 1501–1601; these read LPAR…SDEE, FSIP…CSRG, and YDSE…RGVR. Positions 1098–1116 are enriched in low complexity; sequence ARAPLASASPGPGDPSSPL. Residues 1138-1147 are compositionally biased toward basic and acidic residues; that stretch reads EMAKGSHEDP. A compositionally biased stretch (polar residues) spans 1201 to 1218; it reads ASSSTQGARAQQAPNTEM. The segment covering 1259-1274 has biased composition (acidic residues); sequence DIQEEEEEEEEEEEEE. Residues 1278–1292 are compositionally biased toward polar residues; it reads RTCSFQKQVAGNSIR. Residues 1333 to 1346 show a composition bias toward acidic residues; that stretch reads PEEEEEEEEDEEEE. 2 stretches are compositionally biased toward basic and acidic residues: residues 1420–1429 and 1554–1586; these read RPPDPREHCS and AWEK…EARG. Residues 1625–1693 enclose the SH3 2 domain; the sequence is LPVRIFVALF…PCNMVAEVAV (69 aa). Disordered regions lie at residues 1723 to 1761 and 1823 to 1857; these read VYST…VPSA and SNFL…RVQC. Positions 1764–1831 constitute an SH3 3 domain; that stretch reads KAPHSMVAAF…PSNFLEGPGP (68 aa).

It belongs to the RIMBP family. Interacts with RIMS1 and RIMS2. Interacts with TSPO. Interacts with CACNA1A. Predominantly expressed in brain, pituitary gland and thymus in adults. In adult brain, highest expression found in temporal lobe and the putamen, followed by amygdala, caudate nucleus, cerebral cortex, occipital and frontal lobe. A high expression level is also observed in fetal tissues like brain, heart, kidney and thymus.

It is found in the cytoplasm. It localises to the mitochondrion. Functionally, required for synaptic transmission regulation. It probably controls the recruitement of voltage-gated calcium channels to the presynaptic membrane, and modulates neurotransmitter release. The protein is Peripheral-type benzodiazepine receptor-associated protein 1 of Homo sapiens (Human).